The sequence spans 611 residues: MAAGRVFAFRDARWAPDPVLAPSAAVRSPQPVPLVIDNGSFQTRAGWAAADPSVPAEPLLRFRSLAARSRGARGGAGAETQVGNDLGSPEPLRWLLRSPFDRNVPVQLELQELLFDHVFQRLGVASQGCVDHPIVLTEAVCNPLYSRQMMSELLFECYQVPKVSYGVDSLYSFYHNRRQNWPCSGLVISSGYQCTHILPVLEGRLDAKNCKRINLGGCQAAVYLQRLLQLKYPGHFAAITLSRMEEILHEHSYIAEDYTEELQKWRSPEYYENNVHKMQLPFSNKLLGSTLTSEEKQERRQQQLRRLQELNARRREEKLQLDQERLDRLLYVQELLEDGQMDQFHKALVELNMDSAEELQSYINKLSLAIEQTKQKILQAEVNIEVDIVDSKPETPDLDPLSSEQSLEDVESINEFEPLFAEEQPEAEKPVAAVQPVFNLAEYHQLFLGTERIRAPEIIFQPSLIGEDQTGIAETMQYVLERYSKEQQALLVQNVFLTGGNAMYPGLKARVQKELLEMRPFQSSFQVHLASSPTLDAWYGARDWAVEHMTREEGWITRKDYEEKGGEYLKEHCASNVYVPIRLPKQAPRTTEALAPSRALAAGTGNPCEQA.

Coiled coils occupy residues 290–329 (TLTSEEKQERRQQQLRRLQELNARRREEKLQLDQERLDRL) and 355–386 (SAEELQSYINKLSLAIEQTKQKILQAEVNIEV).

This sequence belongs to the actin family. ARP5 subfamily. As to quaternary structure, component of the chromatin remodeling INO80 complex.

It localises to the nucleus. In terms of biological role, proposed core component of the chromatin remodeling INO80 complex which is involved in transcriptional regulation, DNA replication and probably DNA repair. This chain is Actin-related protein 5 (ACTR5), found in Gallus gallus (Chicken).